The chain runs to 199 residues: Probable thymidylate kinase (199 aa).

13–20 (GIDGAGKT) is an ATP binding site.

Belongs to the thymidylate kinase family.

It catalyses the reaction dTMP + ATP = dTDP + ADP. The polypeptide is Probable thymidylate kinase (Staphylothermus marinus (strain ATCC 43588 / DSM 3639 / JCM 9404 / F1)).